The primary structure comprises 477 residues: Ribulose bisphosphate carboxylase large chain (477 aa).

Residues 1–2 (MS) constitute a propeptide that is removed on maturation. P3 carries the N-acetylproline modification. N123 and T173 together coordinate substrate. Catalysis depends on K175, which acts as the Proton acceptor. Substrate is bound at residue K177. Mg(2+) contacts are provided by K201, D203, and E204. K201 is subject to N6-carboxylysine. Residue H294 is the Proton acceptor of the active site. Substrate-binding residues include R295, H327, and S379.

This sequence belongs to the RuBisCO large chain family. Type I subfamily. In terms of assembly, heterohexadecamer of 8 large chains and 8 small chains; disulfide-linked. The disulfide link is formed within the large subunit homodimers. Requires Mg(2+) as cofactor. The disulfide bond which can form in the large chain dimeric partners within the hexadecamer appears to be associated with oxidative stress and protein turnover.

It is found in the plastid. The protein localises to the chloroplast. The enzyme catalyses 2 (2R)-3-phosphoglycerate + 2 H(+) = D-ribulose 1,5-bisphosphate + CO2 + H2O. It carries out the reaction D-ribulose 1,5-bisphosphate + O2 = 2-phosphoglycolate + (2R)-3-phosphoglycerate + 2 H(+). Functionally, ruBisCO catalyzes two reactions: the carboxylation of D-ribulose 1,5-bisphosphate, the primary event in carbon dioxide fixation, as well as the oxidative fragmentation of the pentose substrate in the photorespiration process. Both reactions occur simultaneously and in competition at the same active site. The polypeptide is Ribulose bisphosphate carboxylase large chain (Avena sativa (Oat)).